Reading from the N-terminus, the 284-residue chain is 4-hydroxybenzoate octaprenyltransferase (284 aa).

9 consecutive transmembrane segments (helical) span residues 19–39, 42–62, 85–105, 107–127, 134–154, 165–185, 211–231, 233–253, and 261–281; these read IPIL…SHGL, ISYL…GCII, GQLS…VAFI, VLFL…LAIL, FFAI…FMAF, AWIF…IYAL, ILLF…YCDF, SFFY…YFLY, and CINA…IAVI.

Belongs to the UbiA prenyltransferase family. Mg(2+) serves as cofactor.

The protein resides in the cell inner membrane. The catalysed reaction is all-trans-octaprenyl diphosphate + 4-hydroxybenzoate = 4-hydroxy-3-(all-trans-octaprenyl)benzoate + diphosphate. It functions in the pathway cofactor biosynthesis; ubiquinone biosynthesis. Functionally, catalyzes the prenylation of para-hydroxybenzoate (PHB) with an all-trans polyprenyl group. Mediates the second step in the final reaction sequence of ubiquinone-8 (UQ-8) biosynthesis, which is the condensation of the polyisoprenoid side chain with PHB, generating the first membrane-bound Q intermediate 3-octaprenyl-4-hydroxybenzoate. This is 4-hydroxybenzoate octaprenyltransferase from Francisella tularensis subsp. tularensis (strain FSC 198).